The following is a 197-amino-acid chain: Nucleoside triphosphate pyrophosphatase (197 aa).

Asp74 acts as the Proton acceptor in catalysis.

The protein belongs to the Maf family. It depends on a divalent metal cation as a cofactor.

It is found in the cytoplasm. It catalyses the reaction a ribonucleoside 5'-triphosphate + H2O = a ribonucleoside 5'-phosphate + diphosphate + H(+). The enzyme catalyses a 2'-deoxyribonucleoside 5'-triphosphate + H2O = a 2'-deoxyribonucleoside 5'-phosphate + diphosphate + H(+). In terms of biological role, nucleoside triphosphate pyrophosphatase. May have a dual role in cell division arrest and in preventing the incorporation of modified nucleotides into cellular nucleic acids. This chain is Nucleoside triphosphate pyrophosphatase, found in Granulibacter bethesdensis (strain ATCC BAA-1260 / CGDNIH1).